Here is a 332-residue protein sequence, read N- to C-terminus: Anthranilate phosphoribosyltransferase (332 aa).

5-phospho-alpha-D-ribose 1-diphosphate-binding positions include Gly-79, 82-83 (GD), Ser-87, 89-92 (NIST), 107-115 (KHGNRSVSS), and Ser-119. Gly-79 contributes to the anthranilate binding site. Ser-91 is a Mg(2+) binding site. Asn-110 lines the anthranilate pocket. Arg-165 serves as a coordination point for anthranilate. Positions 223 and 224 each coordinate Mg(2+).

Belongs to the anthranilate phosphoribosyltransferase family. As to quaternary structure, homodimer. Requires Mg(2+) as cofactor.

It carries out the reaction N-(5-phospho-beta-D-ribosyl)anthranilate + diphosphate = 5-phospho-alpha-D-ribose 1-diphosphate + anthranilate. It participates in amino-acid biosynthesis; L-tryptophan biosynthesis; L-tryptophan from chorismate: step 2/5. Functionally, catalyzes the transfer of the phosphoribosyl group of 5-phosphorylribose-1-pyrophosphate (PRPP) to anthranilate to yield N-(5'-phosphoribosyl)-anthranilate (PRA). This Photorhabdus laumondii subsp. laumondii (strain DSM 15139 / CIP 105565 / TT01) (Photorhabdus luminescens subsp. laumondii) protein is Anthranilate phosphoribosyltransferase.